A 199-amino-acid polypeptide reads, in one-letter code: Cytochrome c-type cyt cy (199 aa).

A helical membrane pass occupies residues 7-27 (ITKIGVTLFAVALFYGFIYML). Low complexity predominate over residues 69-80 (AAETAEAAAPAE). The tract at residues 69 to 93 (AAETAEAAAPAEPAAPPPPAYVEVD) is disordered. Heme c-binding residues include Cys-112, Cys-115, His-116, and Met-148.

Binds 1 heme c group covalently per subunit.

The protein localises to the cell membrane. In terms of biological role, electron transfer pathways that operates during photosynthesis. This is Cytochrome c-type cyt cy (cycY) from Rhodobacter capsulatus (strain ATCC BAA-309 / NBRC 16581 / SB1003).